We begin with the raw amino-acid sequence, 251 residues long: Triosephosphate isomerase (251 aa).

Substrate is bound at residue 9–11 (NWK). Catalysis depends on histidine 94, which acts as the Electrophile. Glutamate 166 (proton acceptor) is an active-site residue. Residues glycine 172, serine 211, and 232–233 (GG) each bind substrate.

It belongs to the triosephosphate isomerase family. Homodimer.

The protein localises to the cytoplasm. It carries out the reaction D-glyceraldehyde 3-phosphate = dihydroxyacetone phosphate. Its pathway is carbohydrate biosynthesis; gluconeogenesis. The protein operates within carbohydrate degradation; glycolysis; D-glyceraldehyde 3-phosphate from glycerone phosphate: step 1/1. Its function is as follows. Involved in the gluconeogenesis. Catalyzes stereospecifically the conversion of dihydroxyacetone phosphate (DHAP) to D-glyceraldehyde-3-phosphate (G3P). The polypeptide is Triosephosphate isomerase (Xanthomonas axonopodis pv. citri (strain 306)).